The sequence spans 532 residues: Fatty-acid amide hydrolase 2-A (532 aa).

The helical transmembrane segment at Phe-9–Ala-29 threads the bilayer. Catalysis depends on charge relay system residues Lys-129 and Ser-204. The Acyl-ester intermediate role is filled by Ser-228.

The protein belongs to the amidase family.

It is found in the membrane. It carries out the reaction N-(5Z,8Z,11Z,14Z-eicosatetraenoyl)-ethanolamine + H2O = ethanolamine + (5Z,8Z,11Z,14Z)-eicosatetraenoate. It catalyses the reaction (9Z)-octadecenamide + H2O = (9Z)-octadecenoate + NH4(+). The chain is Fatty-acid amide hydrolase 2-A (faah2a) from Danio rerio (Zebrafish).